Consider the following 198-residue polypeptide: MAEKQTAKRNRREEILQSLALMLESSDGSQRITTAKLAASVGVSEAALYRHFPSKTRMFDSLIEFIEDSLITRINLILKDEKDTTARLRLIVLLILGFGERNPGLTRILTGHALMFEQDRLQGRINQLFERIEAQLRQVMREKKMREGEGYTLDETLLASQLLAFCEGMLSRFVRSEFKYRPTDDFDARWPLVAAQLQ.

Positions 10–70 (NRREEILQSL…SLIEFIEDSL (61 aa)) constitute an HTH tetR-type domain. The segment at residues 33-52 (TTAKLAASVGVSEAALYRHF) is a DNA-binding region (H-T-H motif). A coiled-coil region spans residues 117-145 (EQDRLQGRINQLFERIEAQLRQVMREKKM).

Belongs to the nucleoid occlusion factor SlmA family. Homodimer. Interacts with FtsZ.

It localises to the cytoplasm. The protein resides in the nucleoid. Its function is as follows. Required for nucleoid occlusion (NO) phenomenon, which prevents Z-ring formation and cell division over the nucleoid. Acts as a DNA-associated cell division inhibitor that binds simultaneously chromosomal DNA and FtsZ, and disrupts the assembly of FtsZ polymers. SlmA-DNA-binding sequences (SBS) are dispersed on non-Ter regions of the chromosome, preventing FtsZ polymerization at these regions. The sequence is that of Nucleoid occlusion factor SlmA from Klebsiella pneumoniae subsp. pneumoniae (strain ATCC 700721 / MGH 78578).